A 257-amino-acid chain; its full sequence is MTTPLYWQTEGEGSDLVLIHGWGMNGAVWQTTSEKLSQHYRVHTVDLSGYGHSAELGCADFDEMVKQVLAQAPKKAAWLGWSLGGLIATKAALTSPERVSQLITVASSPRFSAEKGWRGIKPLVLSQFTEQLKTDFTLTVERFMALQAMGSPNAKQDIKLVKKAVFSRPMPDQQALATGLMILADIDLREAVSQLSMPVCRMYGRLDGLVPIKVAHDMDELMPNSAKIVFEQASHAPFISHNDEFISELRTFLNQHA.

The 225-residue stretch at leucine 16–serine 240 folds into the AB hydrolase-1 domain. Substrate-binding positions include tryptophan 22, serine 82–leucine 83, and phenylalanine 143–glutamine 147. The active-site Nucleophile is the serine 82. Active-site residues include aspartate 207 and histidine 235. Histidine 235 is a substrate binding site.

Belongs to the AB hydrolase superfamily. Carboxylesterase BioH family. As to quaternary structure, monomer.

It localises to the cytoplasm. It carries out the reaction 6-carboxyhexanoyl-[ACP] methyl ester + H2O = 6-carboxyhexanoyl-[ACP] + methanol + H(+). It participates in cofactor biosynthesis; biotin biosynthesis. Its function is as follows. The physiological role of BioH is to remove the methyl group introduced by BioC when the pimeloyl moiety is complete. It allows to synthesize pimeloyl-ACP via the fatty acid synthetic pathway through the hydrolysis of the ester bonds of pimeloyl-ACP esters. The sequence is that of Pimeloyl-[acyl-carrier protein] methyl ester esterase from Aliivibrio fischeri (strain ATCC 700601 / ES114) (Vibrio fischeri).